The sequence spans 84 residues: Small ribosomal subunit protein bS20 (84 aa).

The protein belongs to the bacterial ribosomal protein bS20 family.

In terms of biological role, binds directly to 16S ribosomal RNA. The polypeptide is Small ribosomal subunit protein bS20 (Parabacteroides distasonis (strain ATCC 8503 / DSM 20701 / CIP 104284 / JCM 5825 / NCTC 11152)).